Here is a 198-residue protein sequence, read N- to C-terminus: Armadillo repeat-containing protein 7 (198 aa).

ARM repeat units lie at residues 57–99 and 100–140; these read QVLD…HAGG and VPLI…TATP. Ser-169 carries the phosphoserine modification.

As to quaternary structure, component of the minor spliceosome. Within this complex, interacts with RBM48.

In terms of biological role, as a component of the minor spliceosome, involved in the splicing of U12-type introns in pre-mRNAs. The polypeptide is Armadillo repeat-containing protein 7 (ARMC7) (Homo sapiens (Human)).